Here is a 196-residue protein sequence, read N- to C-terminus: Large ribosomal subunit protein bL17 (196 aa).

The tract at residues 133–196 (AAKRDADKKE…KPAAEEKDAK (64 aa)) is disordered. The span at 134 to 143 (AKRDADKKEA) shows a compositional bias: basic and acidic residues. The segment covering 152–164 (EVAETEAAPEAEA) has biased composition (acidic residues). Residues 184-196 (AAEKPAAEEKDAK) are compositionally biased toward basic and acidic residues.

The protein belongs to the bacterial ribosomal protein bL17 family. In terms of assembly, part of the 50S ribosomal subunit. Contacts protein L32.

This Arthrobacter sp. (strain FB24) protein is Large ribosomal subunit protein bL17.